We begin with the raw amino-acid sequence, 162 residues long: Zinc finger protein ZAT12 (162 aa).

2 consecutive C2H2-type zinc fingers follow at residues 39 to 61 and 82 to 104; these read FTCK…RASH and HPCP…MRRH.

As to expression, expressed in roots, stems and flowers.

The protein localises to the nucleus. Its function is as follows. Transcriptional repressor involved in light acclimation, cold and oxidative stress responses. May regulate a collection of transcripts involved in response to high-light, cold and oxidative stress. The polypeptide is Zinc finger protein ZAT12 (ZAT12) (Arabidopsis thaliana (Mouse-ear cress)).